Here is a 293-residue protein sequence, read N- to C-terminus: Protease HtpX homolog (293 aa).

2 helical membrane passes run Val6–Gly26 and Ser28–Ser48. Position 130 (His130) interacts with Zn(2+). Glu131 is a catalytic residue. His134 is a Zn(2+) binding site. Helical transmembrane passes span Leu145–Gly165 and Pro172–Val192. Residue Glu201 participates in Zn(2+) binding.

Belongs to the peptidase M48B family. Requires Zn(2+) as cofactor.

Its subcellular location is the cell inner membrane. This Rhodospirillum rubrum (strain ATCC 11170 / ATH 1.1.1 / DSM 467 / LMG 4362 / NCIMB 8255 / S1) protein is Protease HtpX homolog.